The sequence spans 271 residues: Autophagy-related protein 5 (271 aa).

Residue K145 forms a Glycyl lysine isopeptide (Lys-Gly) (interchain with G-Cter in ATG12) linkage.

The protein belongs to the ATG5 family. As to quaternary structure, conjugated with ATG12. Interacts with ATG10. The ATG5-ATG12 conjugate forms a complex with several units of ATG16. The ATG12-ATG5 conjugate also associates with ATG3. Conjugated to ATG12; which is essential for autophagy. Conjugation with ATG12 involves ATG7 as an E1-like activating enzyme and ATG10 as an E2-like conjugating enzyme.

It is found in the preautophagosomal structure membrane. In terms of biological role, involved in cytoplasm to vacuole transport (Cvt) and autophagic vesicle formation. Autophagy is essential for maintenance of amino acid levels and protein synthesis under nitrogen starvation. Required for selective autophagic degradation of the nucleus (nucleophagy). Also required for mitophagy, which eliminates defective or superfluous mitochondria in order to fulfill cellular energy requirements and prevent excess ROS production. Conjugation with ATG12, through a ubiquitin-like conjugating system involving ATG7 as an E1-like activating enzyme and ATG10 as an E2-like conjugating enzyme, is essential for its function. The ATG12-ATG5 conjugate acts as an E3-like enzyme which is required for lipidation of ATG8 and ATG8 association to the vesicle membranes. ATG12-ATG5 rearranges the ATG3 catalytic center and enhances its E2 activity. The sequence is that of Autophagy-related protein 5 from Kluyveromyces marxianus (strain DMKU3-1042 / BCC 29191 / NBRC 104275) (Yeast).